A 600-amino-acid polypeptide reads, in one-letter code: Malto-oligosyltrehalose trehalohydrolase (600 aa).

The segment at 1 to 34 is disordered; it reads MTQTQPVTPTPPASFQTQHDPRTRLGATPLPGGA. Residue 273–278 participates in substrate binding; it reads RLDATP. D275 functions as the Nucleophile in the catalytic mechanism. Residue E308 is the Proton donor of the active site. Substrate contacts are provided by residues 328-332, E376, and 399-404; these read DDFHH and HDQIGN.

It belongs to the glycosyl hydrolase 13 family. Monomer.

It is found in the cytoplasm. The catalysed reaction is hydrolysis of (1-&gt;4)-alpha-D-glucosidic linkage in 4-alpha-D-[(1-&gt;4)-alpha-D-glucanosyl]n trehalose to yield trehalose and (1-&gt;4)-alpha-D-glucan.. Its pathway is glycan biosynthesis; trehalose biosynthesis. This Deinococcus radiodurans (strain ATCC 13939 / DSM 20539 / JCM 16871 / CCUG 27074 / LMG 4051 / NBRC 15346 / NCIMB 9279 / VKM B-1422 / R1) protein is Malto-oligosyltrehalose trehalohydrolase (treZ).